The primary structure comprises 91 residues: Small ribosomal subunit protein uS19 (91 aa).

This sequence belongs to the universal ribosomal protein uS19 family.

In terms of biological role, protein S19 forms a complex with S13 that binds strongly to the 16S ribosomal RNA. This Laribacter hongkongensis (strain HLHK9) protein is Small ribosomal subunit protein uS19.